Here is a 525-residue protein sequence, read N- to C-terminus: Peptide chain release factor 3 (525 aa).

In terms of domain architecture, tr-type G spans 8–276; that stretch reads AMRRTFAIIS…AFVKEAPPPQ (269 aa). GTP contacts are provided by residues 17–24, 85–89, and 139–142; these read SHPDAGKT, DTPGH, and NKMD.

This sequence belongs to the TRAFAC class translation factor GTPase superfamily. Classic translation factor GTPase family. PrfC subfamily.

It localises to the cytoplasm. Functionally, increases the formation of ribosomal termination complexes and stimulates activities of RF-1 and RF-2. It binds guanine nucleotides and has strong preference for UGA stop codons. It may interact directly with the ribosome. The stimulation of RF-1 and RF-2 is significantly reduced by GTP and GDP, but not by GMP. The sequence is that of Peptide chain release factor 3 from Coxiella burnetii (strain RSA 331 / Henzerling II).